We begin with the raw amino-acid sequence, 359 residues long: Heat-inducible transcription repressor HrcA (359 aa).

The protein belongs to the HrcA family.

Functionally, negative regulator of class I heat shock genes (grpE-dnaK-dnaJ and groELS operons). Prevents heat-shock induction of these operons. The protein is Heat-inducible transcription repressor HrcA of Roseiflexus sp. (strain RS-1).